The primary structure comprises 243 residues: CTD nuclear envelope phosphatase 1 homolog (243 aa).

The chain crosses the membrane as a helical span at residues 11–27 (ALLLLLSKVWTCICFMF). Positions 56–223 (SLVQRKTLVL…LSLLPMLDAL (168 aa)) constitute an FCP1 homology domain.

Belongs to the dullard family.

It is found in the membrane. The enzyme catalyses O-phospho-L-seryl-[protein] + H2O = L-seryl-[protein] + phosphate. It carries out the reaction O-phospho-L-threonyl-[protein] + H2O = L-threonyl-[protein] + phosphate. Functionally, serine/threonine protein phosphatase that may dephosphorylate and activate lipin-like phosphatases. Lipins are phosphatidate phosphatases that catalyze the conversion of phosphatidic acid to diacylglycerol and control the metabolism of fatty acids at different levels. May indirectly modulate the lipid composition of nuclear and/or endoplasmic reticulum membranes and be required for proper nuclear membrane morphology and/or dynamics. May also indirectly regulate the production of lipid droplets and triacylglycerol. This is CTD nuclear envelope phosphatase 1 homolog (l(1)G0269) from Drosophila pseudoobscura pseudoobscura (Fruit fly).